Reading from the N-terminus, the 195-residue chain is Probable GTP-binding protein EngB (195 aa).

The region spanning 22-194 (LKGEVAFVGR…LDLISTLLKE (173 aa)) is the EngB-type G domain. GTP-binding positions include 30-37 (GRSNVGKS), 56-60 (GKTRS), 74-77 (DLPG), 141-144 (TKMD), and 173-175 (TSS). Mg(2+) contacts are provided by S37 and T58.

It belongs to the TRAFAC class TrmE-Era-EngA-EngB-Septin-like GTPase superfamily. EngB GTPase family. Requires Mg(2+) as cofactor.

In terms of biological role, necessary for normal cell division and for the maintenance of normal septation. The polypeptide is Probable GTP-binding protein EngB (Thermotoga petrophila (strain ATCC BAA-488 / DSM 13995 / JCM 10881 / RKU-1)).